The sequence spans 171 residues: Shikimate kinase (171 aa).

14–19 (GAGKST) serves as a coordination point for ATP. Residue serine 18 participates in Mg(2+) binding. Positions 36, 60, and 82 each coordinate substrate. ATP is bound at residue arginine 120. Arginine 139 is a binding site for substrate. Glutamine 156 is a binding site for ATP.

It belongs to the shikimate kinase family. Monomer. Mg(2+) is required as a cofactor.

The protein resides in the cytoplasm. The catalysed reaction is shikimate + ATP = 3-phosphoshikimate + ADP + H(+). It functions in the pathway metabolic intermediate biosynthesis; chorismate biosynthesis; chorismate from D-erythrose 4-phosphate and phosphoenolpyruvate: step 5/7. In terms of biological role, catalyzes the specific phosphorylation of the 3-hydroxyl group of shikimic acid using ATP as a cosubstrate. In Shewanella baltica (strain OS195), this protein is Shikimate kinase.